We begin with the raw amino-acid sequence, 265 residues long: Type III pantothenate kinase (265 aa).

Position 9 to 16 (Asp9 to Lys16) interacts with ATP. Residues Tyr96 and Gly103–Arg106 contribute to the substrate site. The active-site Proton acceptor is the Asp105. Thr129 contributes to the ATP binding site. Thr189 contacts substrate.

The protein belongs to the type III pantothenate kinase family. In terms of assembly, homodimer. It depends on NH4(+) as a cofactor. K(+) serves as cofactor.

The protein resides in the cytoplasm. It catalyses the reaction (R)-pantothenate + ATP = (R)-4'-phosphopantothenate + ADP + H(+). The protein operates within cofactor biosynthesis; coenzyme A biosynthesis; CoA from (R)-pantothenate: step 1/5. Functionally, catalyzes the phosphorylation of pantothenate (Pan), the first step in CoA biosynthesis. The polypeptide is Type III pantothenate kinase (Burkholderia orbicola (strain AU 1054)).